The following is a 144-amino-acid chain: Putative acetyltransferase SAOUHSC_00995 (144 aa).

The 141-residue stretch at 1–141 (MFSKVNNQKM…EHIEMTKKLT (141 aa)) folds into the N-acetyltransferase domain. Residues 71–73 (VAV), Gly79, and 112–114 (PFY) each bind CoA.

Belongs to the UPF0039 (ElaA) family.

Functionally, could catalyze the transfer of an acetyl group from acetyl coenzyme A (AcCoA) to an acceptor substrate and release both CoA and the acetylated product. This chain is Putative acetyltransferase SAOUHSC_00995, found in Staphylococcus aureus (strain NCTC 8325 / PS 47).